Consider the following 201-residue polypeptide: Small ribosomal subunit protein uS4c (201 aa).

Residues 15 to 43 (LGALPGLTRKRPRSGSDLRNQSRSGKRSQ) form a disordered region. The S4 RNA-binding domain occupies 89–150 (MRLDNILFRL…EQRSRALIQN (62 aa)).

Belongs to the universal ribosomal protein uS4 family. In terms of assembly, part of the 30S ribosomal subunit. Contacts protein S5. The interaction surface between S4 and S5 is involved in control of translational fidelity.

The protein localises to the plastid. It is found in the chloroplast. Functionally, one of the primary rRNA binding proteins, it binds directly to 16S rRNA where it nucleates assembly of the body of the 30S subunit. Its function is as follows. With S5 and S12 plays an important role in translational accuracy. This Drimys granadensis protein is Small ribosomal subunit protein uS4c (rps4).